A 242-amino-acid chain; its full sequence is Uridylate kinase (242 aa).

An ATP-binding site is contributed by 13–16; it reads KLSG. Residue glycine 55 coordinates UMP. 2 residues coordinate ATP: glycine 56 and arginine 60. UMP is bound by residues aspartate 75 and 136–143; that span reads TGNPFFTT. Threonine 163, tyrosine 169, and aspartate 172 together coordinate ATP.

It belongs to the UMP kinase family. In terms of assembly, homohexamer.

Its subcellular location is the cytoplasm. It carries out the reaction UMP + ATP = UDP + ADP. Its pathway is pyrimidine metabolism; CTP biosynthesis via de novo pathway; UDP from UMP (UMPK route): step 1/1. Inhibited by UTP. Functionally, catalyzes the reversible phosphorylation of UMP to UDP. The chain is Uridylate kinase from Zymomonas mobilis subsp. mobilis (strain ATCC 31821 / ZM4 / CP4).